Consider the following 139-residue polypeptide: MKPAARRRARECAVQALYSWQLSQNDIADVEYQFLAEQDVKDVDVLYFRELLSGVATNSAYLDGLMKPYLSRLLEELGQVEKAVLRIALFELSKRSDVPYKVAINEAIELAKTFGAEDSHKFVNGVLDKAAPVIRPNKK.

This sequence belongs to the NusB family.

Its function is as follows. Involved in transcription antitermination. Required for transcription of ribosomal RNA (rRNA) genes. Binds specifically to the boxA antiterminator sequence of the ribosomal RNA (rrn) operons. The sequence is that of Transcription antitermination protein NusB from Salmonella agona (strain SL483).